The primary structure comprises 320 residues: D-amino-acid oxidase (320 aa).

8 residues coordinate FAD: Ala13, Gly14, Val15, Thr42, Thr43, Ser44, Gly48, and Ala49. The D-proline site is built by Tyr220 and Arg274. The D-serine site is built by Tyr220 and Arg274. FAD is bound by residues Arg274, Gly299, Gly300, Gly302, and Thr304. A D-proline-binding site is contributed by Gly300. Residue Gly300 participates in D-serine binding.

It belongs to the DAMOX/DASOX family. FAD is required as a cofactor.

It is found in the cytoplasm. The protein localises to the secreted. It localises to the cell wall. It carries out the reaction a D-alpha-amino acid + O2 + H2O = a 2-oxocarboxylate + H2O2 + NH4(+). In terms of biological role, catalyzes the oxidative deamination of D-amino acids with broad substrate specificity. Enables the organism to utilize D-amino acids as a source of nutrients. Enables the organism to utilize glycine as a carbon source. In Mycobacterium tuberculosis (strain ATCC 25177 / H37Ra), this protein is D-amino-acid oxidase.